A 363-amino-acid chain; its full sequence is Histone-lysine N-methyltransferase ASHH3 (363 aa).

The AWS domain occupies 63–114; it reads DDGIFCSCSSSSPGSSSTVCGSNCHCGMLFSSCSSSCKCGSECNNKPFQQRH. Residues 116 to 233 form the SET domain; the sequence is KKMKLIQTEK…KGEHLTYDYQ (118 aa). One can recognise a Post-SET domain in the interval 239-255; it reads ADQDCHCGAVGCRRKLG.

It belongs to the class V-like SAM-binding methyltransferase superfamily. Histone-lysine methyltransferase family. SET2 subfamily.

Its subcellular location is the nucleus. The protein resides in the chromosome. It localises to the centromere. The enzyme catalyses L-lysyl-[histone] + S-adenosyl-L-methionine = N(6)-methyl-L-lysyl-[histone] + S-adenosyl-L-homocysteine + H(+). Functionally, histone methyltransferase. In Arabidopsis thaliana (Mouse-ear cress), this protein is Histone-lysine N-methyltransferase ASHH3 (ASHH3).